Reading from the N-terminus, the 337-residue chain is Protein-methionine-sulfoxide reductase catalytic subunit MsrP (337 aa).

Positions M1–A48 form a signal peptide, tat-type signal. Residues N94, Y97–E98, C152, T187, N237, R242, and S253–K255 contribute to the Mo-molybdopterin site.

It belongs to the MsrP family. As to quaternary structure, heterodimer of a catalytic subunit (MsrP) and a heme-binding subunit (MsrQ). Mo-molybdopterin serves as cofactor. In terms of processing, predicted to be exported by the Tat system. The position of the signal peptide cleavage has not been experimentally proven.

Its subcellular location is the periplasm. The catalysed reaction is L-methionyl-[protein] + a quinone + H2O = L-methionyl-(S)-S-oxide-[protein] + a quinol. The enzyme catalyses L-methionyl-[protein] + a quinone + H2O = L-methionyl-(R)-S-oxide-[protein] + a quinol. Part of the MsrPQ system that repairs oxidized periplasmic proteins containing methionine sulfoxide residues (Met-O), using respiratory chain electrons. Thus protects these proteins from oxidative-stress damage caused by reactive species of oxygen and chlorine generated by the host defense mechanisms. MsrPQ is essential for the maintenance of envelope integrity under bleach stress, rescuing a wide series of structurally unrelated periplasmic proteins from methionine oxidation. The catalytic subunit MsrP is non-stereospecific, being able to reduce both (R-) and (S-) diastereoisomers of methionine sulfoxide. The chain is Protein-methionine-sulfoxide reductase catalytic subunit MsrP from Pseudomonas aeruginosa (strain ATCC 15692 / DSM 22644 / CIP 104116 / JCM 14847 / LMG 12228 / 1C / PRS 101 / PAO1).